The primary structure comprises 126 residues: Protein ApaG (126 aa).

One can recognise an ApaG domain in the interval Ser2 to His126.

This is Protein ApaG from Shewanella sp. (strain ANA-3).